The sequence spans 156 residues: Snaclec trimecetin subunit alpha (156 aa).

Residues M1–A23 form the signal peptide. Intrachain disulfides connect C25/C36, C53/C150, and C125/C142. The 120-residue stretch at F32–K151 folds into the C-type lectin domain.

Belongs to the snaclec family. In terms of assembly, heterodimer of subunits alpha and beta; disulfide-linked. As to expression, expressed by the venom gland.

Its subcellular location is the secreted. Functionally, snaclec that induces platelet aggregation in either human platelet rich plasma (PRP) or washed platelet suspensions. It causes aggregation in a dose-dependent manner even in the absence of various platelet agonists such as ADP or von Willebrand factor (vWF). Interestingly, it does not induce aggregation in rabbit PRP. A monoclonal antibody against the platelet GPIb receptor blocks the aggregation induced by trimecetin, suggesting that it acts by binding to GPIb (GP1BA/GP1BB). The chain is Snaclec trimecetin subunit alpha from Protobothrops mucrosquamatus (Taiwan habu).